Here is a 102-residue protein sequence, read N- to C-terminus: Small ribosomal subunit protein uS10 (102 aa).

It belongs to the universal ribosomal protein uS10 family. As to quaternary structure, part of the 30S ribosomal subunit.

Functionally, involved in the binding of tRNA to the ribosomes. This Methylocella silvestris (strain DSM 15510 / CIP 108128 / LMG 27833 / NCIMB 13906 / BL2) protein is Small ribosomal subunit protein uS10.